A 616-amino-acid chain; its full sequence is Chaperone protein HscA (616 aa).

The protein belongs to the heat shock protein 70 family.

Its function is as follows. Chaperone involved in the maturation of iron-sulfur cluster-containing proteins. Has a low intrinsic ATPase activity which is markedly stimulated by HscB. Involved in the maturation of IscU. This chain is Chaperone protein HscA, found in Enterobacter sp. (strain 638).